Reading from the N-terminus, the 2467-residue chain is Transcription factor TFIIIB component B'' homolog (2467 aa).

2 disordered regions span residues Met1–Ile145 and Leu159–Gly243. The interval Met1 to Tyr301 is interaction with ZBTB43. Positions Ala81–Ser92 are enriched in low complexity. Residues Ser99–Leu118 show a composition bias toward polar residues. 2 stretches are compositionally biased toward basic and acidic residues: residues Ala133 to Arg144 and Arg177 to Met186. Residues Arg144–Arg177 adopt a coiled-coil conformation. A compositionally biased stretch (acidic residues) spans Asn231–Asp242. The region spanning Arg297–Glu347 is the Myb-like domain. The interval Ala357–Gly472 is required for phosphorylation by CSNK2A1. Disordered regions lie at residues Glu380–Lys513, Ser576–Ala720, Pro748–Trp844, Leu866–Met893, Leu971–Ile1200, Leu1231–Ala1270, Asp1318–Ile1388, Leu1409–Gln1448, Lys1527–Leu1561, Ile1592–Lys1706, Ile1902–Arg1926, Ile1977–Gly2014, Leu2058–Pro2083, Leu2179–Ser2206, Gly2260–Leu2290, and Leu2304–Thr2449. Residues Glu458 to Leu487 are a coiled coil. Residues Ala649–Met660 are compositionally biased toward basic and acidic residues. Residues Arg809–Ile824 are compositionally biased toward basic residues. Basic and acidic residues-rich tracts occupy residues Lys873–Arg884, Thr992–Thr1002, Thr1009–Met1041, Glu1089–Thr1098, Glu1112–Ser1130, and Asp1150–Ser1170. 4 stretches are compositionally biased toward polar residues: residues Leu1180 to Ile1200, Asp1251 to Leu1265, Asp1318 to Val1330, and Pro1364 to Asn1382. Composition is skewed to basic and acidic residues over residues Gln1429–Gln1448, Arg1536–Leu1561, and Ile1592–Asp1603. Polar residues-rich tracts occupy residues Glu1621 to Pro1642 and Tyr1650 to Ser1665. Residues Arg1688–Thr1697 show a composition bias toward basic residues. Basic and acidic residues-rich tracts occupy residues Ile1902 to Ala1913, Ile1977 to His1996, and Ala2068 to Lys2078. Residues Pro2185–Pro2199 show a composition bias toward low complexity. Composition is skewed to polar residues over residues Phe2262–Lys2273, Pro2319–Lys2334, and Thr2414–Gln2429.

Component of TFIIIB complex. The TFIIIB complex has two activities, alpha and beta. The TFIIIB-alpha and TFIIIB-beta activities are required for transcription of genes with TFIIIC-bound internal promoters and PSE transcription factor-bound external promoters, respectively. The TFIIIB-alpha activity complex is composed of TBP, BDP1, and a complex containing both BRF2 and at least four stably associated proteins; YY1 facilitates the formation of TFIIIB-alpha activity complex. The TFIIIB-beta activity complex is composed of TBP, BDP1, and BRF1. Interacts with BRF1; this interaction diminishes during mitosis resulting in the release of BDP1 from chromosomal templates. Component of TFIIIC complex. The TFIIIC complex has two activities, C1 and C2. The TFIIIC2 activity complex is only required for transcription of the 'classical' pol III genes whereas the TFIIIC1 activity complex is required for transcription of all pol III genes. The TFIIIC1 activity complex is composed at least of BDP1. Interacts with ZBTB43. Post-translationally, phosphorylated by CSNK2A1 during mitosis, resulting in its release from chromatin and suppression of polymerase III transcription. In terms of tissue distribution, expressed in the cochlea, particularly in the spiral ligament, the capillaries of the stria vascularis and the basilar membrane.

It localises to the nucleus. In terms of biological role, general activator of RNA polymerase III transcription. Requires for transcription from all three types of polymerase III promoters. Requires for transcription of genes with internal promoter elements and with promoter elements upstream of the initiation site. The chain is Transcription factor TFIIIB component B'' homolog (Bdp1) from Mus musculus (Mouse).